We begin with the raw amino-acid sequence, 310 residues long: Carbamate kinase 1 (310 aa).

Belongs to the carbamate kinase family.

It is found in the cytoplasm. It carries out the reaction hydrogencarbonate + NH4(+) + ATP = carbamoyl phosphate + ADP + H2O + H(+). Its pathway is metabolic intermediate metabolism; carbamoyl phosphate degradation; CO(2) and NH(3) from carbamoyl phosphate: step 1/1. The protein is Carbamate kinase 1 (arcC1) of Staphylococcus epidermidis (strain ATCC 12228 / FDA PCI 1200).